A 173-amino-acid chain; its full sequence is tRNA-specific adenosine deaminase (173 aa).

One can recognise a CMP/dCMP-type deaminase domain in the interval 9 to 121; sequence EFDEKMMRYA…DYKTGAIGSR (113 aa). H61 contributes to the Zn(2+) binding site. The active-site Proton donor is the E63. The Zn(2+) site is built by C91 and C94.

It belongs to the cytidine and deoxycytidylate deaminase family. In terms of assembly, homodimer. Zn(2+) serves as cofactor.

The enzyme catalyses adenosine(34) in tRNA + H2O + H(+) = inosine(34) in tRNA + NH4(+). Its function is as follows. Catalyzes the deamination of adenosine to inosine at the wobble position 34 of tRNA(Arg2). The protein is tRNA-specific adenosine deaminase of Haemophilus influenzae (strain ATCC 51907 / DSM 11121 / KW20 / Rd).